A 437-amino-acid chain; its full sequence is Peptidyl-prolyl cis-trans isomerase CYP38, chloroplastic (437 aa).

The N-terminal 36 residues, 1–36 (MAAAFASLPTFSVVNSSRFPRRRIGFSCSKKPLEVR), are a transit peptide targeting the chloroplast. Residues 37 to 92 (CSSGNTRYTKQRGAFTSLKECAISLALSVGLMVSVPSIALPPNAHAVANPVIPDVS) constitute a thylakoid transit peptide. Residues 245-437 (VKIKDNPNIE…LANPSYKIAG (193 aa)) enclose the PPIase cyclophilin-type domain.

As to expression, ubiquitous. Lower levels of expression in roots.

The protein localises to the plastid. It localises to the chloroplast thylakoid lumen. It carries out the reaction [protein]-peptidylproline (omega=180) = [protein]-peptidylproline (omega=0). Functionally, required for the assembly and stabilization of PSII, but has no PPIases activity. This Arabidopsis thaliana (Mouse-ear cress) protein is Peptidyl-prolyl cis-trans isomerase CYP38, chloroplastic (CYP38).